The sequence spans 513 residues: Ribonuclease Y (513 aa).

A helical membrane pass occupies residues 6–26 (YIIIAVVIIIICVILGLYVVD). Residues 203–288 (TVHVVNLPND…EMVEKAKKEV (86 aa)) form the KH domain. Residues 329–422 (VLKHSIEVSH…VQAADAISAA (94 aa)) form the HD domain.

This sequence belongs to the RNase Y family.

It is found in the cell membrane. Its function is as follows. Endoribonuclease that initiates mRNA decay. The polypeptide is Ribonuclease Y (Clostridium botulinum (strain Loch Maree / Type A3)).